We begin with the raw amino-acid sequence, 614 residues long: Acid phosphatase (614 aa).

Residues 1 to 22 form the signal peptide; it reads MKGTAASALLVALSATAAQARP. One can recognise a Fibronectin type-III domain in the interval 80–176; that stretch reads IPKGMHIHYQ…EVLSFKTSRP (97 aa). Asn110, Asn161, Asn242, Asn295, Asn333, Asn340, Asn352, Asn408, Asn429, Asn512, Asn523, Asn559, and Asn578 each carry an N-linked (GlcNAc...) asparagine glycan. A propeptide spanning residues 606 to 614 is cleaved from the precursor; the sequence is VAGGKKLHS.

In terms of assembly, monomer. Cu cation serves as cofactor. In terms of processing, glycosylated; probably with N-linked high-mannose oligosaccharides.

It localises to the secreted. It carries out the reaction a phosphate monoester + H2O = an alcohol + phosphate. Its activity is regulated as follows. Competitively inhibited by phosphomycin and inorganic orthophosphate. The sequence is that of Acid phosphatase (aphA) from Aspergillus ficuum.